The chain runs to 194 residues: MSNEENKVNEEAVVEEQVEAVGTEADVEWNESAEDSQEAKIAELEAALLASQAQVKEQQDTVLRAKAEEQNVRRRAEEDVDKARKYALKKFAGELLPVLDNLERALESGDKENEAAKALLEGVELTLQTFVSTVEKFGLTVINPMGEAFNPELHQAIGMQASPDHESNTVMIVMQKGYTLNDQVLRPAMVMVAQ.

This sequence belongs to the GrpE family. Homodimer.

It localises to the cytoplasm. Participates actively in the response to hyperosmotic and heat shock by preventing the aggregation of stress-denatured proteins, in association with DnaK and GrpE. It is the nucleotide exchange factor for DnaK and may function as a thermosensor. Unfolded proteins bind initially to DnaJ; upon interaction with the DnaJ-bound protein, DnaK hydrolyzes its bound ATP, resulting in the formation of a stable complex. GrpE releases ADP from DnaK; ATP binding to DnaK triggers the release of the substrate protein, thus completing the reaction cycle. Several rounds of ATP-dependent interactions between DnaJ, DnaK and GrpE are required for fully efficient folding. This chain is Protein GrpE, found in Aliivibrio fischeri (strain ATCC 700601 / ES114) (Vibrio fischeri).